A 373-amino-acid polypeptide reads, in one-letter code: Ribosomal RNA small subunit methyltransferase H (373 aa).

Residues 92–94 (GGH), D111, Y138, D159, and Q166 each bind S-adenosyl-L-methionine. Composition is skewed to basic and acidic residues over residues 343–355 (AERA…ERNP) and 363–373 (RALEKVGGRGS). A disordered region spans residues 343–373 (AERADEQEIERNPRSAPVRLRALEKVGGRGS).

It belongs to the methyltransferase superfamily. RsmH family.

Its subcellular location is the cytoplasm. It carries out the reaction cytidine(1402) in 16S rRNA + S-adenosyl-L-methionine = N(4)-methylcytidine(1402) in 16S rRNA + S-adenosyl-L-homocysteine + H(+). In terms of biological role, specifically methylates the N4 position of cytidine in position 1402 (C1402) of 16S rRNA. This chain is Ribosomal RNA small subunit methyltransferase H, found in Mycolicibacterium smegmatis (strain ATCC 700084 / mc(2)155) (Mycobacterium smegmatis).